The primary structure comprises 228 residues: 7-cyano-7-deazaguanine synthase (228 aa).

8 to 18 (LSGGMDSATTL) lines the ATP pocket. Residues C188, C198, C201, and C204 each coordinate Zn(2+).

Belongs to the QueC family. Requires Zn(2+) as cofactor.

It catalyses the reaction 7-carboxy-7-deazaguanine + NH4(+) + ATP = 7-cyano-7-deazaguanine + ADP + phosphate + H2O + H(+). It functions in the pathway purine metabolism; 7-cyano-7-deazaguanine biosynthesis. Catalyzes the ATP-dependent conversion of 7-carboxy-7-deazaguanine (CDG) to 7-cyano-7-deazaguanine (preQ(0)). The sequence is that of 7-cyano-7-deazaguanine synthase from Nitrosomonas europaea (strain ATCC 19718 / CIP 103999 / KCTC 2705 / NBRC 14298).